Reading from the N-terminus, the 615-residue chain is Zinc finger protein 181 (615 aa).

In terms of domain architecture, KRAB spans 48 to 120; the sequence is VTFSDVAIDF…EKKLSKGLIP (73 aa). Residues K153 and K170 each participate in a glycyl lysine isopeptide (Lys-Gly) (interchain with G-Cter in SUMO2) cross-link. 11 consecutive C2H2-type zinc fingers follow at residues 281–303, 309–331, 337–359, 365–387, 393–415, 421–443, 449–471, 477–499, 505–527, 533–555, and 561–583; these read YTCS…WRIH, YECR…LISH, YKCI…QSTH, YECM…LRIH, YECR…QKIH, YECR…QRIH, YECN…QSIH, FECQ…LRNH, YECS…HRIH, YECI…QRIH, and YKCN…QRVH.

It belongs to the krueppel C2H2-type zinc-finger protein family.

It is found in the nucleus. May be involved in transcriptional regulation. This Pongo abelii (Sumatran orangutan) protein is Zinc finger protein 181 (ZNF181).